Here is a 194-residue protein sequence, read N- to C-terminus: MKGNWSIVRKVLHRQFSTLRSSTPSSRLSTSIRPLVLAPNSISSLIARNSLFTASNIGPSIDFNFSNTSLPHRRSLCSEAGGENGVVLVKSEEEFINAMSKAQDGSLPSVFYFTAAWCGPCRFISPVIVELSKQYPDVTTYKVDIDEGGISNTISKLNITAVPTLHFFKGGSKKGEVVGADVTKLKNLMEQLYK.

A mitochondrion-targeting transit peptide spans 1–42; it reads MKGNWSIVRKVLHRQFSTLRSSTPSSRLSTSIRPLVLAPNSI. A Phosphoserine modification is found at serine 75. The Thioredoxin domain occupies 89–194; that stretch reads VKSEEEFINA…LKNLMEQLYK (106 aa). Active-site nucleophile residues include cysteine 118 and cysteine 121. Cysteine 118 and cysteine 121 form a disulfide bridge.

Belongs to the thioredoxin family. Plant O-type subfamily.

The protein resides in the mitochondrion matrix. In terms of biological role, thiol-disulfide oxidoreductase that may participate in various redox reactions. Possesses insulin disulfide bonds reducing activity. Reduced by thioredoxin reductases NTRA and NTRB. In Arabidopsis thaliana (Mouse-ear cress), this protein is Thioredoxin O1, mitochondrial.